The following is a 539-amino-acid chain: M protein, serotype 24 (539 aa).

Positions 1-42 (MTKNNTNRHYSLRKLKTGTASVAVALTVLGAGLVVNTNEVSA) are cleaved as a signal peptide. An A-1 repeat occupies 118–152 (LEARKADLEKALEGAMNFSTADSAKIKTLEAEKAA). The segment at 118-301 (LEARKADLEK…ALEAEKADLE (184 aa)) is 5.3 X 35 AA tandem repeats, A-type. An A-2 repeat occupies 153 to 187 (LAARKADLEKALEGAMNFSTADSAKIKTLEAEKAA). Residues 188–222 (LEARQAELEKALEGAMNFSTADSAKIKTLEAEKAA) form an A-3 repeat. Residues 223 to 257 (LAARKADLEKALEGAMNFSTADSAKIKTLEAEKAA) form an A-4 repeat. One copy of the A-5 repeat lies at 258–292 (LEARQAELEKALEGAMNFSTADSAKIKTLEAEKAA). Residues 293–297 (LEAEK) form an A-6; truncated repeat. The tract at residues 297 to 401 (KADLEHQSQV…REAKKQVEKA (105 aa)) is disordered. 3 C repeats span residues 298–332 (ADLE…EAEH), 333–367 (QKLE…EAEH), and 368–402 (QKLE…EKAL). Over residues 303-312 (QSQVLNANRQ) the composition is skewed to polar residues. Basic and acidic residues-rich tracts occupy residues 314-340 (LRRD…EQNK), 349-375 (LRRD…EQNK), and 384-401 (LRRD…VEKA). D repeat units lie at residues 435–440 (AKLEAE), 441–446 (AKALKE), 449–454 (AKQAEE), and 456–461 (AKLRAG). Positions 456-511 (AKLRAGKASDSQTPDAKPGNKAVPGKGQAPQAGTKPNQNKAPMKETKRQLPSTGET) are disordered. Residues 505–509 (LPSTG) carry the LPXTG sorting signal motif. The residue at position 508 (Thr508) is a Pentaglycyl murein peptidoglycan amidated threonine. The propeptide at 509–539 (GETANPFFTAAALTVMATAGVAAVVKRKEEN) is removed by sortase.

This sequence belongs to the M protein family.

It localises to the secreted. It is found in the cell wall. This protein is one of the different antigenic serotypes of protein M. Protein M is closely associated with virulence of the bacterium and can render the organism resistant to phagocytosis. The polypeptide is M protein, serotype 24 (emm24) (Streptococcus pyogenes).